A 354-amino-acid polypeptide reads, in one-letter code: Regulatory protein RapD (354 aa).

TPR repeat units lie at residues Phe64–Ala105, Lys107–Thr126, Ala130–Gln163, Ile171–Leu204, Cys211–Glu244, and Ile321–Arg353.

Belongs to the Rap family.

The protein localises to the cytoplasm. This chain is Regulatory protein RapD (rapD), found in Bacillus subtilis (strain 168).